Consider the following 26-residue polypeptide: Muscarinic toxin-like protein 1 (26 aa).

Belongs to the three-finger toxin family. Short-chain subfamily. Orphan group VIII (haditoxin) sub-subfamily. In terms of assembly, homodimer; non-covalently linked. As to expression, expressed by the venom gland.

Its subcellular location is the secreted. Functionally, antagonist of muscle and neuronal nicotinic acetylcholine receptors (nAChR) with highest affinity for neuronal alpha-7/CHRNA7 nAChRs. The sequence is that of Muscarinic toxin-like protein 1 from Naja naja (Indian cobra).